We begin with the raw amino-acid sequence, 504 residues long: Maturase K (504 aa).

The protein belongs to the intron maturase 2 family. MatK subfamily.

The protein localises to the plastid. The protein resides in the chloroplast. Functionally, usually encoded in the trnK tRNA gene intron. Probably assists in splicing its own and other chloroplast group II introns. In Chimaphila umbellata (Pipsissewa), this protein is Maturase K.